Consider the following 242-residue polypeptide: Myb-related protein MYBAS2 (242 aa).

HTH myb-type domains lie at 5–61 (REEI…HPGL) and 62–112 (KRGR…RKKA). A DNA-binding region (H-T-H motif) is located at residues 33-57 (WDFIAKVSGLNRTGKSCRLRWVNYL). The Bipartite nuclear localization signal 1 motif lies at 62–65 (KRGR). Residues 85 to 108 (WSRIARRLPGRTDNEIKNYWRTHM) constitute a DNA-binding region (H-T-H motif). The Bipartite nuclear localization signal 2 motif lies at 109–117 (RKKAQERKS). Residues 110–133 (KKAQERKSNMSPSSSSSSLTYQSC) form a disordered region. Positions 118–133 (NMSPSSSSSSLTYQSC) are enriched in low complexity.

The protein localises to the nucleus. Transcription factor. The protein is Myb-related protein MYBAS2 (MYBAS2) of Oryza sativa subsp. japonica (Rice).